We begin with the raw amino-acid sequence, 182 residues long: CDP-diacylglycerol--glycerol-3-phosphate 3-phosphatidyltransferase (182 aa).

Residues 2–12 (QFNIPTLLTLF) lie on the Cytoplasmic side of the membrane. Residues 13–37 (RVILIPFLVVVFYLPFAWAPMVSAL) form a helical membrane-spanning segment. The Periplasmic portion of the chain corresponds to 38–60 (IFCIAAITDWFDGFLARRWNQST). A helical transmembrane segment spans residues 61–81 (RFGAFLDPVADKVLVAIAMVL). At 82–86 (VTEHY) the chain is on the cytoplasmic side. The chain crosses the membrane as a helical span at residues 87-107 (HSWWVTLPAATMIAREIIISA). At 108–145 (LREWMAELGKRSSVAVSWIGKVKTTAQMVALAWLLWRP) the chain is on the periplasmic side. Residues 146–168 (NIWVEYAGIALFFVAAVLTLWSM) traverse the membrane as a helical segment. Topologically, residues 169–181 (LQYLSAARGDLLD) are cytoplasmic.

It belongs to the CDP-alcohol phosphatidyltransferase class-I family.

The protein localises to the cell inner membrane. It carries out the reaction a CDP-1,2-diacyl-sn-glycerol + sn-glycerol 3-phosphate = a 1,2-diacyl-sn-glycero-3-phospho-(1'-sn-glycero-3'-phosphate) + CMP + H(+). It participates in phospholipid metabolism; phosphatidylglycerol biosynthesis; phosphatidylglycerol from CDP-diacylglycerol: step 1/2. In terms of biological role, catalyzes the conversion of cytidine diphosphate diacylglycerol (CDP-DG) and glycerol 3-phosphate into phosphatidylglycerol. Essential for the synthesis of anionic phospholipids, thereby playing a role in balancing the ratio of zwitterionic and anionic phospholipids, which is thought to be important for normal membrane function. The sequence is that of CDP-diacylglycerol--glycerol-3-phosphate 3-phosphatidyltransferase from Salmonella choleraesuis (strain SC-B67).